Consider the following 214-residue polypeptide: Octanoyltransferase (214 aa).

The BPL/LPL catalytic domain maps to 28-210; that stretch reads GTAEDALYLL…EFGKVFTDTA (183 aa). Residues 73 to 80, 140 to 142, and 153 to 155 contribute to the substrate site; these read RGGNITCH, SIG, and GLS. Cysteine 171 (acyl-thioester intermediate) is an active-site residue.

It belongs to the LipB family.

It is found in the cytoplasm. It catalyses the reaction octanoyl-[ACP] + L-lysyl-[protein] = N(6)-octanoyl-L-lysyl-[protein] + holo-[ACP] + H(+). It functions in the pathway protein modification; protein lipoylation via endogenous pathway; protein N(6)-(lipoyl)lysine from octanoyl-[acyl-carrier-protein]: step 1/2. Functionally, catalyzes the transfer of endogenously produced octanoic acid from octanoyl-acyl-carrier-protein onto the lipoyl domains of lipoate-dependent enzymes. Lipoyl-ACP can also act as a substrate although octanoyl-ACP is likely to be the physiological substrate. The protein is Octanoyltransferase of Maridesulfovibrio salexigens (strain ATCC 14822 / DSM 2638 / NCIMB 8403 / VKM B-1763) (Desulfovibrio salexigens).